The chain runs to 376 residues: Erythronate-4-phosphate dehydrogenase (376 aa).

Substrate is bound by residues Ser-45 and Thr-66. The NAD(+) site is built by Asp-146 and Thr-175. The active site involves Arg-209. Asp-233 contributes to the NAD(+) binding site. The active site involves Glu-238. His-255 functions as the Proton donor in the catalytic mechanism. Gly-258 is a binding site for NAD(+). Tyr-259 lines the substrate pocket.

Belongs to the D-isomer specific 2-hydroxyacid dehydrogenase family. PdxB subfamily. As to quaternary structure, homodimer.

It is found in the cytoplasm. The enzyme catalyses 4-phospho-D-erythronate + NAD(+) = (R)-3-hydroxy-2-oxo-4-phosphooxybutanoate + NADH + H(+). It participates in cofactor biosynthesis; pyridoxine 5'-phosphate biosynthesis; pyridoxine 5'-phosphate from D-erythrose 4-phosphate: step 2/5. In terms of biological role, catalyzes the oxidation of erythronate-4-phosphate to 3-hydroxy-2-oxo-4-phosphonooxybutanoate. The sequence is that of Erythronate-4-phosphate dehydrogenase from Baumannia cicadellinicola subsp. Homalodisca coagulata.